A 421-amino-acid polypeptide reads, in one-letter code: Alpha-1-antitrypsin (421 aa).

An N-terminal signal peptide occupies residues 1 to 24 (MASSSTWGLLLLAGLCCLVPISLA). N-linked (GlcNAc...) asparagine glycosylation is found at asparagine 73 and asparagine 110. The tract at residues 376 to 395 (GATILEAIPMSIPPNVKFNK) is RCL. At serine 386 the chain carries Phosphoserine.

The protein belongs to the serpin family. Interacts with CELA2A. Interacts with ERGIC3 and LMAN1/ERGIC53. Interacts with PRSS1/Trypsin.

Its subcellular location is the secreted. Inhibitor of serine proteases. Its primary target is elastase, but it also has a moderate affinity for plasmin and thrombin. The sequence is that of Alpha-1-antitrypsin (SERPINA1) from Sus scrofa (Pig).